Here is an 876-residue protein sequence, read N- to C-terminus: ATP-dependent helicase Lhr-Core (876 aa).

ATP contacts are provided by glutamine 37, lysine 60, threonine 61, aspartate 175, glutamate 176, arginine 374, and histidine 377. Residues 41 to 232 (IPLIKKGKNV…FLVGGNGDYE (192 aa)) enclose the Helicase ATP-binding domain. The DEAH box signature appears at 175 to 178 (DEIH). One can recognise a Helicase C-terminal domain in the interval 249 to 421 (PVKDLVHATE…NIHVPENPLD (173 aa)). Residues 422–506 (VLTQLIVAAS…IFFLNSGTIP (85 aa)) are WH domain. The interval 507–876 (DEAMIPVKME…DLEYTEAGIK (370 aa)) is domain 4.

It belongs to the Lhr helicase family. Lhr-Core subfamily. In terms of assembly, monomer.

It catalyses the reaction Couples ATP hydrolysis with the unwinding of duplex DNA by translocating in the 3'-5' direction.. It carries out the reaction ATP + H2O = ADP + phosphate + H(+). Probably part of a 4-gene DNA damage response locus in which the upstream ups system, in combination with this downstream locus, functions in homologous recombination to rescue Sulfolobales from DNA-damaging threats. DNA helicase that translocates in a 3'-5' direction on single-stranded (ss)DNA. Binds Holliday junction (HJ) DNA, Y-shaped DNA, DNA with a 3'-overhang and single-stranded (ss)DNA with high affinity; binds double-stranded (ds)DNA with less affinity. Has helicase activity on DNA with a 3'-overhang, Y-shaped DNA and HJ DNA. Does not unwind blunt-ended dsDNA or DNA with a 5'-overhang. This is ATP-dependent helicase Lhr-Core from Sulfolobus acidocaldarius (strain ATCC 33909 / DSM 639 / JCM 8929 / NBRC 15157 / NCIMB 11770).